A 238-amino-acid polypeptide reads, in one-letter code: Phosphoribosylaminoimidazole-succinocarboxamide synthase (238 aa).

The protein belongs to the SAICAR synthetase family.

The catalysed reaction is 5-amino-1-(5-phospho-D-ribosyl)imidazole-4-carboxylate + L-aspartate + ATP = (2S)-2-[5-amino-1-(5-phospho-beta-D-ribosyl)imidazole-4-carboxamido]succinate + ADP + phosphate + 2 H(+). It participates in purine metabolism; IMP biosynthesis via de novo pathway; 5-amino-1-(5-phospho-D-ribosyl)imidazole-4-carboxamide from 5-amino-1-(5-phospho-D-ribosyl)imidazole-4-carboxylate: step 1/2. This is Phosphoribosylaminoimidazole-succinocarboxamide synthase from Marinomonas sp. (strain MWYL1).